Reading from the N-terminus, the 152-residue chain is MAKRVQVVLNEDVLSLGRDGDMVEVAPGYARNFLLPYGKAVPVTPAVMKQVEHRRAKEAERQAALKQEALAFRTALDTIGRFTVKKQTGDDDVLFGTVTNGDVAEVIEEATKKEVDRRDITVPDIHRTGNYKVSVKLHSEVTAEINLEVVSY.

This sequence belongs to the bacterial ribosomal protein bL9 family.

Binds to the 23S rRNA. This Synechococcus sp. (strain WH7803) protein is Large ribosomal subunit protein bL9.